The chain runs to 256 residues: Glutamate racemase (256 aa).

Substrate contacts are provided by residues 5-6 (DS) and 37-38 (YG). The Proton donor/acceptor role is filled by Cys-69. Residue 70 to 71 (NT) coordinates substrate. Cys-181 acts as the Proton donor/acceptor in catalysis. 182–183 (TH) is a binding site for substrate.

This sequence belongs to the aspartate/glutamate racemases family.

The enzyme catalyses L-glutamate = D-glutamate. It participates in cell wall biogenesis; peptidoglycan biosynthesis. In terms of biological role, provides the (R)-glutamate required for cell wall biosynthesis. The sequence is that of Glutamate racemase from Buchnera aphidicola subsp. Schizaphis graminum (strain Sg).